The sequence spans 513 residues: MKRDLVLVIDFGGQYNQLIARRVRECNVYCEVHPYNLSVDEIKQMNPKGIIFTGGPNSVYGENSPLCDKAIFELGVPIFGICYGSQLMSHILGGKVATAPVSEYGKTKVDVNIESKLFEGVSSSTICWMSHTDYIEKAPEEFKVIGNTPVCPVAAMECEDKNLYAVQFHPEVMHTEEGTKMLSNFVYNICGCTGDWKMDSFVEKTIEEVRQKVGNGKVLCALSGGVDSSVAAVLLSRAVGKQLTCVFVDHGLLRKNEGDEVEEIFGPNGQYDLNFIRVNAQERFYEKLAGIEEPEQKRKIIGEEFIRVFEEEAKKIGTVDYLVQGTIYPDVIESGLGKSAVIKSHHNVGGLPDYVDFKEIIEPLRLLFKDEVRKAGLELGIPEKLVFRQPFPGPGLGIRIIGEVTAEKVKIVQDADAIYREEIANAGIDKEIGQYFAALTNMRSVGVMGDERTYDYAIALRAVTTSDFMTAESADLPWEVLGKVTTRIVNEVKGVNRVMYDCTGKPPATIEFE.

The Glutamine amidotransferase type-1 domain maps to leucine 5–aspartate 195. Cysteine 82 serves as the catalytic Nucleophile. Residues histidine 169 and glutamate 171 contribute to the active site. Residues tryptophan 196–arginine 388 form the GMPS ATP-PPase domain. Serine 223–serine 229 is a binding site for ATP.

Homodimer.

The catalysed reaction is XMP + L-glutamine + ATP + H2O = GMP + L-glutamate + AMP + diphosphate + 2 H(+). It participates in purine metabolism; GMP biosynthesis; GMP from XMP (L-Gln route): step 1/1. In terms of biological role, catalyzes the synthesis of GMP from XMP. This is GMP synthase [glutamine-hydrolyzing] from Clostridium botulinum (strain Eklund 17B / Type B).